A 116-amino-acid polypeptide reads, in one-letter code: MSNIIKQIEQEQLKQNVPSFRPGDTLEVKVWVVEGSKRRLQAFEGVVIAIRNRGLHSAFTLRKVSNGVGVERVLQTHSPIIDSIFVKRKGAVRKAKLYYLRERSGKSARIKERLGN.

It belongs to the bacterial ribosomal protein bL19 family.

In terms of biological role, this protein is located at the 30S-50S ribosomal subunit interface and may play a role in the structure and function of the aminoacyl-tRNA binding site. This is Large ribosomal subunit protein bL19 from Haemophilus ducreyi (strain 35000HP / ATCC 700724).